The following is a 334-amino-acid chain: MFGKPDKMDVRCHSDAEAARVSKNAHKESRESKGAEGNLPAAFLKEPQGAFSASGAAEDCNKSKSNSAADPDYCRRILVRDAKGSIREIILPKGLDLDRPKRTRTSFTAEQLYRLEMEFQRCQYVVGRERTELARQLNLSETQVKVWFQNRRTKQKKDQGKDSELRSVVSETAATCSVLRLLEQGRLLSPPGLPALLPPCATGALGSALRGPSLPALGAGAAAGSAAAAAAAAPGPAGAASPHPPAVGGAPGPGPAGPGGLHAGAPAAGHSLFSLPVPSLLGSVASRLSSAPLTMAGSLAGNLQELSARYLSSSAFEPYSRTNNKEGAEKKALD.

A compositionally biased stretch (basic and acidic residues) spans 1–34; it reads MFGKPDKMDVRCHSDAEAARVSKNAHKESRESKG. Residues 1-41 form a disordered region; sequence MFGKPDKMDVRCHSDAEAARVSKNAHKESRESKGAEGNLPA. Positions 100–159 form a DNA-binding region, homeobox; that stretch reads PKRTRTSFTAEQLYRLEMEFQRCQYVVGRERTELARQLNLSETQVKVWFQNRRTKQKKDQ. 2 disordered regions span residues 234–263 and 314–334; these read PGPA…GLHA and SAFE…KALD. Positions 323–334 are enriched in basic and acidic residues; sequence NNKEGAEKKALD.

It belongs to the EMX homeobox family.

It localises to the nucleus. Transcription factor that may function in dorsoventral specification of the forebrain. Required for axon guidance and major tract formation in the developing forebrain. May contribute to the differentiation of the neuroretina, pigmented epithelium and optic stalk. In Homo sapiens (Human), this protein is Ventral anterior homeobox 1 (VAX1).